Reading from the N-terminus, the 642-residue chain is Threonine--tRNA ligase (642 aa).

Residues 1-61 (MPVITLPDGS…ENDATLSIIT (61 aa)) enclose the TGS domain. The segment at 243-534 (DHRKIGKQLD…LTEEFAGFFP (292 aa)) is catalytic. Zn(2+) is bound by residues Cys-334, His-385, and His-511.

This sequence belongs to the class-II aminoacyl-tRNA synthetase family. In terms of assembly, homodimer. Zn(2+) is required as a cofactor.

It localises to the cytoplasm. The enzyme catalyses tRNA(Thr) + L-threonine + ATP = L-threonyl-tRNA(Thr) + AMP + diphosphate + H(+). Its function is as follows. Catalyzes the attachment of threonine to tRNA(Thr) in a two-step reaction: L-threonine is first activated by ATP to form Thr-AMP and then transferred to the acceptor end of tRNA(Thr). Also edits incorrectly charged L-seryl-tRNA(Thr). The polypeptide is Threonine--tRNA ligase (Salmonella paratyphi A (strain ATCC 9150 / SARB42)).